The chain runs to 314 residues: Porphobilinogen deaminase (314 aa).

Cysteine 243 bears the S-(dipyrrolylmethanemethyl)cysteine mark.

Belongs to the HMBS family. Monomer. Dipyrromethane is required as a cofactor.

It carries out the reaction 4 porphobilinogen + H2O = hydroxymethylbilane + 4 NH4(+). Its pathway is porphyrin-containing compound metabolism; protoporphyrin-IX biosynthesis; coproporphyrinogen-III from 5-aminolevulinate: step 2/4. Tetrapolymerization of the monopyrrole PBG into the hydroxymethylbilane pre-uroporphyrinogen in several discrete steps. This is Porphobilinogen deaminase from Bordetella bronchiseptica (strain ATCC BAA-588 / NCTC 13252 / RB50) (Alcaligenes bronchisepticus).